The chain runs to 223 residues: Pyridoxal phosphate homeostasis protein (223 aa).

Residue Lys36 is modified to N6-(pyridoxal phosphate)lysine.

The protein belongs to the pyridoxal phosphate-binding protein YggS/PROSC family. Monomer.

Functionally, pyridoxal 5'-phosphate (PLP)-binding protein, which is involved in PLP homeostasis. This Buchnera aphidicola subsp. Baizongia pistaciae (strain Bp) protein is Pyridoxal phosphate homeostasis protein.